The sequence spans 801 residues: Potassium transporter 1 (801 aa).

Residues 1-20 (MSSALEVEGSGSPGVEPAAT) are disordered. The Cytoplasmic portion of the chain corresponds to 1–57 (MSSALEVEGSGSPGVEPAATATASRLKRHDSLFGDAEKVSGGKHHGGSAVSWAVTLH). The chain crosses the membrane as a helical span at residues 58–80 (LAFQSVGIIYGDIGTSPLYVYSS). Residues 81–94 (TFPDGIGHRDDLVG) lie on the Extracellular side of the membrane. A helical membrane pass occupies residues 95 to 115 (VLSLILYTLIIIPMLKYVFIV). Topologically, residues 116-181 (LYANDNGDGG…HKLESSRAAK (66 aa)) are cytoplasmic. Residues 182–202 (MALFFLTILGTSMVMGDGTLT) traverse the membrane as a helical segment. Topologically, residues 203–219 (PAISVLSAVSGIREKAP) are extracellular. Residues 220 to 240 (NLTQTQVVLISVAILFMLFSV) traverse the membrane as a helical segment. Residues 241–247 (QRFGTDK) are Cytoplasmic-facing. Residues 248 to 268 (VGYTFAPIISVWFLLIAGIGL) traverse the membrane as a helical segment. The Extracellular portion of the chain corresponds to 269-298 (YNLVVHEITILKAFNPWYIVQYFRRNGKKG). The helical transmembrane segment at 299–319 (WVSLGGVVLCVTGTEGMFADL) threads the bilayer. Residues 320-328 (GHFNIRAVQ) are Cytoplasmic-facing. Residues 329–349 (ISFNCILFPSVALCYIGQAAY) traverse the membrane as a helical segment. Over 350 to 375 (LRKFPENVSDTFYKSIPGKYRDRLNF) the chain is Extracellular. Residues 376-398 (GPLFWPTFIVAILAAIIASQAML) traverse the membrane as a helical segment. Residues 399-429 (SGAFAILSKALSLGCLPRVRVIHTSKKYEGQ) lie on the Cytoplasmic side of the membrane. A helical transmembrane segment spans residues 430-450 (VYIPEVNFMMGLASIIVTIAF). The Extracellular portion of the chain corresponds to 451-461 (RTTTSIGNAYG). A helical membrane pass occupies residues 462 to 482 (ICVVTTFMVTTHLMTVVMLLI). Topologically, residues 483 to 487 (WKKHL) are cytoplasmic. A helical membrane pass occupies residues 488–508 (VFILLFYCVFGFTEVVYLSSI). The Extracellular portion of the chain corresponds to 509–511 (LSK). Residues 512–532 (FVDGGYLPFCFAMVLMTMMAT) form a helical membrane-spanning segment. Over 533-801 (WHYVHVRRYW…LLKVGITYEI (269 aa)) the chain is Cytoplasmic. Residues 679 to 728 (DDDDEAAARPRRSTSSAVHSEEAIQAASSGRTTASSVQLQAGGEPPAAMD) form a disordered region. Residues 704–717 (AASSGRTTASSVQL) are compositionally biased toward polar residues.

Belongs to the HAK/KUP transporter (TC 2.A.72.3) family. As to expression, expressed almost exclusively in roots.

It is found in the cell membrane. High-affinity potassium transporter. Also transports rubidium, with the same affinity and cesium, with a lower affinity. The protein is Potassium transporter 1 (HAK1) of Oryza sativa subsp. japonica (Rice).